Here is a 187-residue protein sequence, read N- to C-terminus: Large ribosomal subunit protein uL10 (187 aa).

Belongs to the universal ribosomal protein uL10 family. In terms of assembly, part of the ribosomal stalk of the 50S ribosomal subunit. The N-terminus interacts with L11 and the large rRNA to form the base of the stalk. The C-terminus forms an elongated spine to which L12 dimers bind in a sequential fashion forming a multimeric L10(L12)X complex.

Forms part of the ribosomal stalk, playing a central role in the interaction of the ribosome with GTP-bound translation factors. The chain is Large ribosomal subunit protein uL10 from Synechococcus sp. (strain JA-2-3B'a(2-13)) (Cyanobacteria bacterium Yellowstone B-Prime).